Reading from the N-terminus, the 359-residue chain is ATP synthase subunit gamma, chloroplastic (359 aa).

The transit peptide at 1–35 directs the protein to the chloroplast; that stretch reads MSCSHLSTAWSSSALASSASTTRRRSPPRSGLLVR. The active site involves Cys-124. A disulfide bridge links Cys-234 with Cys-240.

Belongs to the ATPase gamma chain family. In terms of assembly, F-type ATPases have 2 components, CF(1) - the catalytic core - and CF(0) - the membrane proton channel. CF(1) has five subunits: alpha(3), beta(3), gamma(1), delta(1), epsilon(1). CF(0) has four main subunits: a, b, b' and c.

The protein localises to the plastid. It is found in the chloroplast thylakoid membrane. Produces ATP from ADP in the presence of a proton gradient across the membrane. The gamma chain is believed to be important in regulating ATPase activity and the flow of protons through the CF(0) complex. Functionally, inceptin is a proteolytic fragment produced by insect larvae that previously ingested the protein. This peptide mediate plant perception of herbivory through the induction of volatile, phenylpropanoid and protease inhibitor defenses such as ethylene, jasmonic acid and salicylic acid for example. The polypeptide is ATP synthase subunit gamma, chloroplastic (Zea mays (Maize)).